Reading from the N-terminus, the 222-residue chain is MTSGESKTSLKNAYPAAKKLLPKVEEEGEAEEYCTPGAFELERLFWKGSPQYTHVNEVWPKLYIGDEATALDRYGLQKAGFTHVLNAAHGRWNVDTGPDYYRDMAIEYHGVEADDLPTFDLSIFFYPAAAFIDAALRYEHSKILVHCAMGRSRSATLVLAYLMIHRNMTLVDAIRQVAKNRCVLPNRGFLKQLRELDKQLVQQRRGAQHRGEAGEKAGEKEP.

The Tyrosine-protein phosphatase domain maps to 54–202 (HVNEVWPKLY…LRELDKQLVQ (149 aa)). Residue 146-153 (HCAMGRSR) coordinates substrate. The active-site Phosphocysteine intermediate is the Cys-147. A disordered region spans residues 201–222 (VQQRRGAQHRGEAGEKAGEKEP). The segment covering 209-222 (HRGEAGEKAGEKEP) has biased composition (basic and acidic residues).

The protein belongs to the protein-tyrosine phosphatase family. Non-receptor class dual specificity subfamily. In terms of assembly, homodimer. Interacts with PRKAA2.

It is found in the cytoplasm. It localises to the nucleus. The enzyme catalyses O-phospho-L-tyrosyl-[protein] + H2O = L-tyrosyl-[protein] + phosphate. It carries out the reaction O-phospho-L-seryl-[protein] + H2O = L-seryl-[protein] + phosphate. The catalysed reaction is O-phospho-L-threonyl-[protein] + H2O = L-threonyl-[protein] + phosphate. Functionally, dual specificity phosphatase able to dephosphorylate phosphotyrosine, phosphoserine and phosphothreonine residues within the same substrate, with a preference for phosphotyrosine as a substrate. Involved in the modulation of intracellular signaling cascades. In skeletal muscle regulates systemic glucose homeostasis by activating, AMPK, an energy sensor protein kinase. Affects MAP kinase signaling though modulation of the MAPK1/2 cascade in skeletal muscle promoting muscle cell differentiation, development and atrophy. In Sus scrofa (Pig), this protein is Dual specificity phosphatase 29 (DUSP29).